Here is a 403-residue protein sequence, read N- to C-terminus: Protein-export membrane protein SecD (403 aa).

Helical transmembrane passes span 13–33, 245–265, 285–305, 306–326, 347–367, and 368–388; these read LLVI…KGVN, FLKM…VIIA, VVFL…PALA, GIIL…DEIV, VVLA…VAGM, and GLLK…VVIT.

This sequence belongs to the SecD/SecF family. SecD subfamily. As to quaternary structure, part of the protein translocation apparatus. Forms a complex with SecF.

Its subcellular location is the cell membrane. Involved in protein export. In Methanopyrus kandleri (strain AV19 / DSM 6324 / JCM 9639 / NBRC 100938), this protein is Protein-export membrane protein SecD.